Reading from the N-terminus, the 361-residue chain is MSKFSFNIHQMHKKARSGVITTAHGEIRTPAFMPVGTRGTIKAMLSESVAETGADILLGNTYHLMLQPSSERIARLGGLHKFMNWHKPILTDSGGFQVMSLSKLCKITEEGVSFSSHINGDKYMLTPERSTEIQYLLGSTITMAFDECTAYPATFEEAKTSVQLTTRWADRSRKAFVKREGYAQFGIIQGSVYQELREQSAKDLVKLDFEGYAIGGLAVGEGQELMFKVLDYTPNFLPQNKPCYLMGVGKPADIIGAVSRGIDMFDCVIPTRSGRNGQAFTKYGTVNIRNSKYADDDEPLEYDCLCPACKNYSKAYLHYLVKIGEILGSMLMTWHNLTYFQNLMSRIRTYIKAGQDFDFIT.

The active-site Proton acceptor is aspartate 92. Residues 92 to 96 (DSGGF), aspartate 146, glutamine 189, and glycine 216 contribute to the substrate site. The RNA binding stretch occupies residues 247 to 253 (GVGKPAD). The Nucleophile role is filled by aspartate 266. The RNA binding; important for wobble base 34 recognition stretch occupies residues 271–275 (TRSGR). Residues cysteine 304, cysteine 306, cysteine 309, and histidine 335 each coordinate Zn(2+).

The protein belongs to the queuine tRNA-ribosyltransferase family. In terms of assembly, homodimer. Within each dimer, one monomer is responsible for RNA recognition and catalysis, while the other monomer binds to the replacement base PreQ1. Zn(2+) serves as cofactor.

The enzyme catalyses 7-aminomethyl-7-carbaguanine + guanosine(34) in tRNA = 7-aminomethyl-7-carbaguanosine(34) in tRNA + guanine. It participates in tRNA modification; tRNA-queuosine biosynthesis. Catalyzes the base-exchange of a guanine (G) residue with the queuine precursor 7-aminomethyl-7-deazaguanine (PreQ1) at position 34 (anticodon wobble position) in tRNAs with GU(N) anticodons (tRNA-Asp, -Asn, -His and -Tyr). Catalysis occurs through a double-displacement mechanism. The nucleophile active site attacks the C1' of nucleotide 34 to detach the guanine base from the RNA, forming a covalent enzyme-RNA intermediate. The proton acceptor active site deprotonates the incoming PreQ1, allowing a nucleophilic attack on the C1' of the ribose to form the product. After dissociation, two additional enzymatic reactions on the tRNA convert PreQ1 to queuine (Q), resulting in the hypermodified nucleoside queuosine (7-(((4,5-cis-dihydroxy-2-cyclopenten-1-yl)amino)methyl)-7-deazaguanosine). This Rickettsia canadensis (strain McKiel) protein is Queuine tRNA-ribosyltransferase.